We begin with the raw amino-acid sequence, 763 residues long: Protein translocase subunit SecA 2 (763 aa).

ATP is bound by residues Q83, 101–105 (GEGKT), and D490.

The protein belongs to the SecA family. In terms of assembly, monomer and homodimer. Part of the essential Sec protein translocation apparatus which comprises SecA, SecYEG and auxiliary proteins SecDF. Other proteins may also be involved.

It localises to the cell membrane. Its subcellular location is the cytoplasm. The catalysed reaction is ATP + H2O + cellular proteinSide 1 = ADP + phosphate + cellular proteinSide 2.. In terms of biological role, part of the Sec protein translocase complex. Interacts with the SecYEG preprotein conducting channel. Has a central role in coupling the hydrolysis of ATP to the transfer of proteins into and across the cell membrane, serving as an ATP-driven molecular motor driving the stepwise translocation of polypeptide chains across the membrane. This Corynebacterium glutamicum (strain R) protein is Protein translocase subunit SecA 2.